Here is a 200-residue protein sequence, read N- to C-terminus: Ciliary neurotrophic factor (200 aa).

It belongs to the CNTF family. In terms of assembly, homodimer. Nervous system.

The protein localises to the cytoplasm. CNTF is a survival factor for various neuronal cell types. Seems to prevent the degeneration of motor axons after axotomy. This Homo sapiens (Human) protein is Ciliary neurotrophic factor (CNTF).